We begin with the raw amino-acid sequence, 400 residues long: Nicotinate phosphoribosyltransferase (400 aa).

Phosphohistidine; by autocatalysis is present on His220.

This sequence belongs to the NAPRTase family. Transiently phosphorylated on a His residue during the reaction cycle. Phosphorylation strongly increases the affinity for substrates and increases the rate of nicotinate D-ribonucleotide production. Dephosphorylation regenerates the low-affinity form of the enzyme, leading to product release.

It carries out the reaction nicotinate + 5-phospho-alpha-D-ribose 1-diphosphate + ATP + H2O = nicotinate beta-D-ribonucleotide + ADP + phosphate + diphosphate. Its pathway is cofactor biosynthesis; NAD(+) biosynthesis; nicotinate D-ribonucleotide from nicotinate: step 1/1. Its function is as follows. Catalyzes the synthesis of beta-nicotinate D-ribonucleotide from nicotinate and 5-phospho-D-ribose 1-phosphate at the expense of ATP. The protein is Nicotinate phosphoribosyltransferase of Cronobacter sakazakii (strain ATCC BAA-894) (Enterobacter sakazakii).